Consider the following 136-residue polypeptide: MMPLSRSRLEFIATILQNVLNLGLLTLGLILVVFLGKETVHLADALFVPEQASKYELVEGLVIYFLYFEFIALIVKYFKSGLHFPLRYFVYIGITAIVRLIIVDHKTPMDVLLYSAAILLLVITLWLCNSNRLRRE.

4 consecutive transmembrane segments (helical) span residues 15–35, 55–75, 83–103, and 108–128; these read ILQN…VVFL, YELV…ALIV, HFPL…LIIV, and PMDV…LWLC.

Belongs to the PsiE family.

Its subcellular location is the cell inner membrane. In Salmonella agona (strain SL483), this protein is Protein PsiE.